We begin with the raw amino-acid sequence, 160 residues long: Transcription antitermination protein NusB (160 aa).

Belongs to the NusB family.

Involved in transcription antitermination. Required for transcription of ribosomal RNA (rRNA) genes. Binds specifically to the boxA antiterminator sequence of the ribosomal RNA (rrn) operons. This Chlamydia pneumoniae (Chlamydophila pneumoniae) protein is Transcription antitermination protein NusB.